A 177-amino-acid polypeptide reads, in one-letter code: uncharacterized protein (177 aa).

The next 4 membrane-spanning stretches (helical) occupy residues 20 to 42, 62 to 84, 94 to 116, and 136 to 158; these read NLVSYAVGGILAIAGYVLILLAL, VVLWIIAVLIVIFAVGISFVSLS, AMSSFLVGVILFYILSVIGGYFI, and GLLYFIGTLLLIVIVGIIVIIVA.

It localises to the cell membrane. This is an uncharacterized protein from Methanocaldococcus jannaschii (strain ATCC 43067 / DSM 2661 / JAL-1 / JCM 10045 / NBRC 100440) (Methanococcus jannaschii).